Consider the following 419-residue polypeptide: Inositol-tetrakisphosphate 1-kinase (419 aa).

Lysine 18 contacts 1D-myo-inositol 1,3,4-trisphosphate. Residues arginine 106 and lysine 157 each coordinate ATP. In terms of domain architecture, ATP-grasp spans 117–334; sequence EAYMKDDRIC…TGGAATEEVA (218 aa). The 1D-myo-inositol 1,3,4-trisphosphate site is built by histidine 167 and lysine 199. ATP contacts are provided by residues 188 to 199, serine 214, serine 232, and serine 236; that span reads QNFINHNAVLYK. 3 residues coordinate Mg(2+): aspartate 281, aspartate 295, and asparagine 297. Asparagine 297 is a binding site for 1D-myo-inositol 1,3,4-trisphosphate. N6-acetyllysine; by EP300 and CREBBP is present on lysine 388. Position 401 is a phosphoserine (serine 401). Lysine 415 bears the N6-acetyllysine; by EP300 and CREBBP mark.

Belongs to the ITPK1 family. In terms of assembly, monomer. Interacts with GPS1/COPS1. It depends on Mg(2+) as a cofactor. In terms of processing, acetylation by EP300 and CREBBP destabilizes ITPK1, and down-regulates enzymatic activity. Deacetylated by SIRT1.

It catalyses the reaction 1D-myo-inositol 3,4,5,6-tetrakisphosphate + ATP = 1D-myo-inositol 1,3,4,5,6-pentakisphosphate + ADP + H(+). The enzyme catalyses 1D-myo-inositol 1,3,4-trisphosphate + ATP = 1D-myo-inositol 1,3,4,5-tetrakisphosphate + ADP + H(+). The catalysed reaction is 1D-myo-inositol 1,3,4-trisphosphate + ATP = 1D-myo-inositol 1,3,4,6-tetrakisphosphate + ADP + H(+). It carries out the reaction 1D-myo-inositol 3,4,6-trisphosphate + ATP = 1D-myo-inositol 1,3,4,6-tetrakisphosphate + ADP + H(+). It catalyses the reaction 1D-myo-inositol 1,3,4-trisphosphate + 1D-myo-inositol 1,3,4,5,6-pentakisphosphate = 1D-myo-inositol 3,4,5,6-tetrakisphosphate + 1D-myo-inositol 1,3,4,6-tetrakisphosphate. The enzyme catalyses 1D-myo-inositol 1,3,4-trisphosphate + 1D-myo-inositol 1,3,4,5,6-pentakisphosphate = 1D-myo-inositol 3,4,5,6-tetrakisphosphate + 1D-myo-inositol 1,3,4,5-tetrakisphosphate. In terms of biological role, kinase that can phosphorylate various inositol polyphosphate such as Ins(3,4,5,6)P4 or Ins(1,3,4)P3. Phosphorylates Ins(3,4,5,6)P4 at position 1 to form Ins(1,3,4,5,6)P5. This reaction is thought to have regulatory importance, since Ins(3,4,5,6)P4 is an inhibitor of plasma membrane Ca(2+)-activated Cl(-) channels, while Ins(1,3,4,5,6)P5 is not. Also phosphorylates Ins(1,3,4)P3 on O-5 and O-6 to form Ins(1,3,4,6)P4, an essential molecule in the hexakisphosphate (InsP6) pathway. Also acts as an inositol polyphosphate phosphatase that dephosphorylates Ins(1,3,4,5)P4 and Ins(1,3,4,6)P4 to Ins(1,3,4)P3, and Ins(1,3,4,5,6)P5 to Ins(3,4,5,6)P4. May also act as an isomerase that interconverts the inositol tetrakisphosphate isomers Ins(1,3,4,5)P4 and Ins(1,3,4,6)P4 in the presence of ADP and magnesium. Probably acts as the rate-limiting enzyme of the InsP6 pathway. Modifies TNF-alpha-induced apoptosis by interfering with the activation of TNFRSF1A-associated death domain. Plays an important role in MLKL-mediated necroptosis. Produces highly phosphorylated inositol phosphates such as inositolhexakisphosphate (InsP6) which bind to MLKL mediating the release of an N-terminal auto-inhibitory region leading to its activation. Essential for activated phospho-MLKL to oligomerize and localize to the cell membrane during necroptosis. This Mus musculus (Mouse) protein is Inositol-tetrakisphosphate 1-kinase.